Here is a 1765-residue protein sequence, read N- to C-terminus: RANBP2-like and GRIP domain-containing protein 5/6 (1765 aa).

Thr19 is subject to Phosphothreonine. Ser21 is subject to Phosphoserine. TPR repeat units follow at residues 26–59 (SMKG…QERD), 60–93 (PKAH…NPTQ), and 648–681 (EDAH…VSYW). Disordered stretches follow at residues 760 to 804 (GPLY…PRWT) and 924 to 945 (FGIS…NDTG). The segment covering 778-797 (STPSPTKYSLSPSKSYKYSP) has biased composition (low complexity). The segment covering 931–941 (NQEKKREKPLE) has biased composition (basic and acidic residues). A RanBD1 1 domain is found at 1036–1172 (HFEPVVQMPE…FEECQRLLLD (137 aa)). Disordered regions lie at residues 1214–1247 (KVTE…PTLE) and 1306–1330 (AKLN…EERD). Positions 1235-1244 (IKPNAENTGP) are enriched in polar residues. Positions 1317 to 1329 (TDEESVVTQEEER) are enriched in acidic residues. In terms of domain architecture, RanBD1 2 spans 1333 to 1469 (YFEPVVPLPD…FDEAKTAQEK (137 aa)). The segment covering 1580 to 1593 (NNSETSSVAQSGSE) has biased composition (polar residues). The interval 1580–1621 (NNSETSSVAQSGSESKVEPKKCELSKNSDIEQSSDSKVKNLS) is disordered. Residues 1594-1617 (SKVEPKKCELSKNSDIEQSSDSKV) show a composition bias toward basic and acidic residues. One can recognise a GRIP domain in the interval 1702–1752 (REKSAANLEYLKNVLLQFIFLKPGSERERLLPVINTMLQLSPEEKGKLAAV).

In terms of tissue distribution, expressed in testis.

Its subcellular location is the cytoplasm. The polypeptide is RANBP2-like and GRIP domain-containing protein 5/6 (RGPD5) (Homo sapiens (Human)).